We begin with the raw amino-acid sequence, 198 residues long: Peptidyl-tRNA hydrolase (198 aa).

Residue Tyr15 coordinates tRNA. The Proton acceptor role is filled by His20. TRNA is bound by residues Phe65, Asn67, and Asn113.

Belongs to the PTH family. Monomer.

It localises to the cytoplasm. It catalyses the reaction an N-acyl-L-alpha-aminoacyl-tRNA + H2O = an N-acyl-L-amino acid + a tRNA + H(+). In terms of biological role, hydrolyzes ribosome-free peptidyl-tRNAs (with 1 or more amino acids incorporated), which drop off the ribosome during protein synthesis, or as a result of ribosome stalling. Its function is as follows. Catalyzes the release of premature peptidyl moieties from peptidyl-tRNA molecules trapped in stalled 50S ribosomal subunits, and thus maintains levels of free tRNAs and 50S ribosomes. The protein is Peptidyl-tRNA hydrolase of Ehrlichia chaffeensis (strain ATCC CRL-10679 / Arkansas).